Reading from the N-terminus, the 371-residue chain is MGEGDAIWAPPILPHSTLGTLSHHPELHFGGKMESKVSEGGLNVTLTIRLLMHGKEVGSIIGKKGETVKKMREESGARINISEGNCPERIVTITGPTDAIFKAFAMIAYKFEEDIINSMSNSPATSKPPVTLRLVVPASQCGSLIGKGGSKIKEIRESTGAQVQVAGDMLPNSTERAVTISGTPDAIIQCVKQICVVMLESPPKGATIPYRPKPASTPVIFAGGQAYTIQGQYAIPHPDQLTKLHQLAMQQTPFPPLGQTNPAFPGEKLPLHSSEEAQNLMGQSSGLDASPPASTHELTIPNDLIGCIIGRQGTKINEIRQMSGAQIKIANATEGSSERQITITGTPANISLAQYLINARLTSEVTGMGAL.

KH domains are found at residues 45 to 95 (TLTI…TITG), 129 to 182 (PVTL…TISG), and 293 to 357 (ASTH…QYLI).

Widely expressed, with highest levels in testis and fat tissues and lowest in heart.

It localises to the cytoplasm. Functionally, single-stranded nucleic acid binding protein that binds preferentially to oligo dC. This is Poly(rC)-binding protein 3 (Pcbp3) from Mus musculus (Mouse).